A 265-amino-acid polypeptide reads, in one-letter code: Interleukin-1 alpha (265 aa).

The propeptide occupies 1–108 (MAKVPDLFED…DTEEVIMKPR (108 aa)). Lysine 78 bears the N6-acetyllysine mark. The interval 78 to 82 (KKRRL) is nuclear localization signal (NLS). Position 83 is a phosphoserine (serine 83). Asparagine 98 and asparagine 137 each carry an N-linked (GlcNAc...) asparagine glycan.

The protein belongs to the IL-1 family. As to quaternary structure, monomer. Interacts with TMED10; the interaction mediates the translocation from the cytoplasm into the ERGIC (endoplasmic reticulum-Golgi intermediate compartment) and thereby secretion. Interacts with IL1R1. Interacts with S100A13; this interaction is the first step in the export of IL1A, followed by direct translocation of this complex across the plasma membrane. Acetylated within its nuclear localization sequence, which impacts subcellular localization. In terms of processing, proteolytic processed by CAPN1 in a calcium-dependent manner. Cleavage from 31 kDa precursor to 18 kDa biologically active molecules. Post-translationally, phosphorylated. Phosphorylation greatly enhances susceptibility to digestion and promotes the conversion of pre-IL1A alpha to the biologically active IL1A.

Its subcellular location is the nucleus. The protein localises to the cytoplasm. It localises to the secreted. Cytokine constitutively present intracellularly in nearly all resting non-hematopoietic cells that plays an important role in inflammation and bridges the innate and adaptive immune systems. After binding to its receptor IL1R1 together with its accessory protein IL1RAP, forms the high affinity interleukin-1 receptor complex. Signaling involves the recruitment of adapter molecules such as MYD88, IRAK1 or IRAK4. In turn, mediates the activation of NF-kappa-B and the three MAPK pathways p38, p42/p44 and JNK pathways. Within the cell, acts as an alarmin and cell death results in its liberation in the extracellular space after disruption of the cell membrane to induce inflammation and alert the host to injury or damage. In addition to its role as a danger signal, which occurs when the cytokine is passively released by cell necrosis, directly senses DNA damage and acts as signal for genotoxic stress without loss of cell integrity. The polypeptide is Interleukin-1 alpha (IL1A) (Canis lupus familiaris (Dog)).